Here is a 506-residue protein sequence, read N- to C-terminus: ATP-dependent rRNA helicase RRP3 (506 aa).

2 disordered regions span residues 1–22 (MSGKVDKKKGSSVKKTEGKSKE) and 37–88 (NQKK…FESF). The span at 49 to 69 (SDQEDDPSESEEEEGSDSEDV) shows a compositional bias: acidic residues. Residues 86 to 114 (ESFSDLDLVPELIEACKNLNFAKPTPIQA) carry the Q motif motif. The region spanning 117-289 (IPPALQGHDI…RASLTNPVKC (173 aa)) is the Helicase ATP-binding domain. 130–137 (AQTGSGKT) contributes to the ATP binding site. The short motif at 236–239 (DEAD) is the DEAD box element. Residues 312-460 (LKNTYLIYLM…KENVNKDAIL (149 aa)) form the Helicase C-terminal domain. The disordered stretch occupies residues 485–506 (IARGKGRRGRMAARDDMDKGER). Residues 496 to 506 (AARDDMDKGER) show a composition bias toward basic and acidic residues.

The protein belongs to the DEAD box helicase family. DDX47/RRP3 subfamily. As to quaternary structure, interacts with the SSU processome.

It is found in the nucleus. The enzyme catalyses ATP + H2O = ADP + phosphate + H(+). Functionally, ATP-dependent rRNA helicase required for pre-ribosomal RNA processing. Involved in the maturation of the 35S-pre-rRNA and to its cleavage to mature 18S rRNA. The sequence is that of ATP-dependent rRNA helicase RRP3 from Vanderwaltozyma polyspora (strain ATCC 22028 / DSM 70294 / BCRC 21397 / CBS 2163 / NBRC 10782 / NRRL Y-8283 / UCD 57-17) (Kluyveromyces polysporus).